The sequence spans 62 residues: Large ribosomal subunit protein uL30 (62 aa).

The protein belongs to the universal ribosomal protein uL30 family. Part of the 50S ribosomal subunit.

The protein is Large ribosomal subunit protein uL30 of Shewanella frigidimarina (strain NCIMB 400).